Consider the following 268-residue polypeptide: Interleukin-1 beta (268 aa).

Residues 1-116 (MAEVPELASE…TRNNDACVHD (116 aa)) constitute a propeptide that is removed on maturation.

It belongs to the IL-1 family. Monomer. In its precursor form, weakly interacts with full-length MEFV; the mature cytokine does not interact at all. Interacts with integrins ITGAV:ITGBV and ITGA5:ITGB1; integrin-binding is required for IL1B signaling. Interacts with cargo receptor TMED10; the interaction is direct and is required for the secretion of IL1B mature form. Interacts with HSP90AB1; the interaction facilitates cargo translocation into the ERGIC. Interacts with HSP90B1; the interaction facilitates cargo translocation into the ERGIC.

The protein localises to the cytoplasm. It localises to the cytosol. The protein resides in the secreted. Its subcellular location is the lysosome. It is found in the extracellular exosome. In terms of biological role, potent pro-inflammatory cytokine. Initially discovered as the major endogenous pyrogen, induces prostaglandin synthesis, neutrophil influx and activation, T-cell activation and cytokine production, B-cell activation and antibody production, and fibroblast proliferation and collagen production. Promotes Th17 differentiation of T-cells. Synergizes with IL12/interleukin-12 to induce IFNG synthesis from T-helper 1 (Th1) cells. Plays a role in angiogenesis by inducing VEGF production synergistically with TNF and IL6. Involved in transduction of inflammation downstream of pyroptosis: its mature form is specifically released in the extracellular milieu by passing through the gasdermin-D (GSDMD) pore. This is Interleukin-1 beta (IL1B) from Macaca fascicularis (Crab-eating macaque).